A 111-amino-acid polypeptide reads, in one-letter code: Cyclin-dependent protein kinase inhibitor SMR2 (111 aa).

The disordered stretch occupies residues 1–66 (MSKLLETLEE…PPPRKRPREI (66 aa)). Basic and acidic residues predominate over residues 10 to 35 (EEKTVEQKPRSQEEEDHQDSSKKEEL).

Interacts with CYCD2-1. Interacts with CDKB1-1. Expressed at low levels in roots and stems. Expressed in the root vascular tissue.

Its subcellular location is the nucleus. Functionally, cyclin-dependent protein kinase (CDK) inhibitor that restricts cell proliferation and cooperates with SIM and SMR1 to promote endoreplication during leaf development. The sequence is that of Cyclin-dependent protein kinase inhibitor SMR2 from Arabidopsis thaliana (Mouse-ear cress).